Reading from the N-terminus, the 390-residue chain is GTPase Obg (390 aa).

An Obg domain is found at 1-159 (MKFVDEASIL…RELLLELMLL (159 aa)). The interval 127–147 (NTRFKSSVNRTPRQKTNGTPG) is disordered. The segment covering 129-145 (RFKSSVNRTPRQKTNGT) has biased composition (polar residues). Residues 160–333 (ADVGMLGMPN…LCWDVMTFII (174 aa)) form the OBG-type G domain. Residues 166-173 (GMPNAGKS), 191-195 (FTTLV), 213-216 (DIPG), 283-286 (NKID), and 314-316 (SAA) each bind GTP. Residues Ser173 and Thr193 each coordinate Mg(2+).

Belongs to the TRAFAC class OBG-HflX-like GTPase superfamily. OBG GTPase family. As to quaternary structure, monomer. Requires Mg(2+) as cofactor.

Its subcellular location is the cytoplasm. In terms of biological role, an essential GTPase which binds GTP, GDP and possibly (p)ppGpp with moderate affinity, with high nucleotide exchange rates and a fairly low GTP hydrolysis rate. Plays a role in control of the cell cycle, stress response, ribosome biogenesis and in those bacteria that undergo differentiation, in morphogenesis control. The chain is GTPase Obg from Escherichia fergusonii (strain ATCC 35469 / DSM 13698 / CCUG 18766 / IAM 14443 / JCM 21226 / LMG 7866 / NBRC 102419 / NCTC 12128 / CDC 0568-73).